The sequence spans 445 residues: Gamma conglutin 2 (445 aa).

Positions 1–33 are cleaved as a signal peptide; the sequence is MAQNMAPIFHFIAISLSCSFLFVLSSSQDSQSL. In terms of domain architecture, Peptidase A1 spans 60-425; sequence HWANIHKRTP…DFAKSRVEFN (366 aa). Cystine bridges form between C88-C178, C102-C115, C107-C133, C118-C128, and C346-C387. Residue N130 is glycosylated (N-linked (GlcNAc...) asparagine).

It belongs to the peptidase A1 family. As to quaternary structure, two-subunit monomeric unit made of alpha and beta subunits coupled by disulfide bonds (at pH 4.5 and under non-reducing conditions). Can also form oligomers including dimer, tetramer and cyclic hexamer (trimer of dimers) (at pH &gt; 5.5). Component of globulins complexes which accumulate in seeds. Interacts with flavonoids (e.g. apigenin glucosides) present in globulins complexes. Post-translationally, glycosylated on alpha chain.

It is found in the secreted. The protein localises to the extracellular space. Sulfur-rich seed storage protein that remains undegraded at germination. This Lupinus angustifolius (Narrow-leaved blue lupine) protein is Gamma conglutin 2.